A 1752-amino-acid polypeptide reads, in one-letter code: DNA-directed RNA polymerase II subunit rpb1 (1752 aa).

Zn(2+) is bound by residues Cys-69, Cys-72, Cys-79, His-82, Cys-109, Cys-112, Cys-150, and Cys-175. Residues Asp-487, Asp-489, and Asp-491 each coordinate Mg(2+). Positions 816 to 828 are bridging helix; that stretch reads PQEFFFHAMAGRE. A Glycyl lysine isopeptide (Lys-Gly) (interchain with G-Cter in ubiquitin) cross-link involves residue Lys-1252. Phosphoserine occurs at positions 1489, 1499, 1506, and 1529. Position 1531 is a phosphotyrosine (Tyr-1531). The tract at residues 1554–1752 is disordered; sequence TSPSYSPSSP…SPSYSPTSPS (199 aa). Repeat copies occupy residues 1558-1564, 1578-1584, 1585-1591, 1592-1598, and 1599-1605. The segment at 1558 to 1752 is C-terminal domain (CTD); 26 X 7 AA approximate tandem repeats of Y-S-P-[TS]-S-P-S; the sequence is YSPSSPGYST…SPSYSPTSPS (195 aa). A 6; approximate repeat occupies 1606–1612; that stretch reads YSATSPS. Repeat copies occupy residues 1613-1619, 1620-1626, 1627-1633, 1634-1640, 1641-1647, 1648-1654, 1655-1661, 1662-1668, 1669-1675, 1676-1682, 1683-1689, 1690-1696, 1697-1703, 1704-1710, 1711-1717, 1718-1724, 1725-1731, 1732-1738, 1739-1745, and 1746-1752.

This sequence belongs to the RNA polymerase beta' chain family. As to quaternary structure, component of the RNA polymerase II (Pol II) complex consisting of 12 subunits. The tandem 7 residues repeats in the C-terminal domain (CTD) can be highly phosphorylated. The phosphorylation activates Pol II. Phosphorylation occurs mainly at residues 'Ser-2' and 'Ser-5' of the heptapeptide repeat. The phosphorylation state is believed to result from the balanced action of site-specific CTD kinases and phosphatase, and a 'CTD code' that specifies the position of Pol II within the transcription cycle has been proposed. In terms of processing, following transcription stress, the elongating form of RNA polymerase II (RNA pol IIo) is polyubiquitinated via 'Lys-63'-linkages on Lys-1252 at DNA damage sites without leading to degradation: ubiquitination promotes RNA pol IIo backtracking to allow access by the transcription-coupled nucleotide excision repair (TC-NER) machinery. Subsequent def1-dependent polyubiquitination by the elongin complex via 'Lys-48'-linkages may lead to proteasome-mediated degradation; presumably at stalled RNA pol II where TC-NER has failed, to halt global transcription and enable 'last resort' DNA repair pathways.

The protein localises to the nucleus. The enzyme catalyses RNA(n) + a ribonucleoside 5'-triphosphate = RNA(n+1) + diphosphate. Functionally, DNA-dependent RNA polymerase catalyzes the transcription of DNA into RNA using the four ribonucleoside triphosphates as substrates. Largest and catalytic component of RNA polymerase II which synthesizes mRNA precursors and many functional non-coding RNAs. Forms the polymerase active center together with the second largest subunit. Pol II is the central component of the basal RNA polymerase II transcription machinery. It is composed of mobile elements that move relative to each other. RPB1 is part of the core element with the central large cleft, the clamp element that moves to open and close the cleft and the jaws that are thought to grab the incoming DNA template. At the start of transcription, a single-stranded DNA template strand of the promoter is positioned within the central active site cleft of Pol II. A bridging helix emanates from RPB1 and crosses the cleft near the catalytic site and is thought to promote translocation of Pol II by acting as a ratchet that moves the RNA-DNA hybrid through the active site by switching from straight to bent conformations at each step of nucleotide addition. During transcription elongation, Pol II moves on the template as the transcript elongates. Elongation is influenced by the phosphorylation status of the C-terminal domain (CTD) of Pol II largest subunit (RPB1), which serves as a platform for assembly of factors that regulate transcription initiation, elongation, termination and mRNA processing. The protein is DNA-directed RNA polymerase II subunit rpb1 (rpb1) of Schizosaccharomyces pombe (strain 972 / ATCC 24843) (Fission yeast).